The primary structure comprises 593 residues: Aspartate--tRNA ligase (593 aa).

Glutamate 180 is an L-aspartate binding site. The interval 204 to 207 (QIFK) is aspartate. L-aspartate is bound at residue arginine 226. ATP-binding positions include 226 to 228 (RDE) and glutamine 235. Position 453 (histidine 453) interacts with L-aspartate. Glutamate 487 provides a ligand contact to ATP. An L-aspartate-binding site is contributed by arginine 494. 539–542 (GLDR) serves as a coordination point for ATP.

The protein belongs to the class-II aminoacyl-tRNA synthetase family. Type 1 subfamily. In terms of assembly, homodimer.

It is found in the cytoplasm. It catalyses the reaction tRNA(Asp) + L-aspartate + ATP = L-aspartyl-tRNA(Asp) + AMP + diphosphate. Its function is as follows. Catalyzes the attachment of L-aspartate to tRNA(Asp) in a two-step reaction: L-aspartate is first activated by ATP to form Asp-AMP and then transferred to the acceptor end of tRNA(Asp). This Clostridium botulinum (strain Okra / Type B1) protein is Aspartate--tRNA ligase.